The sequence spans 710 residues: Polyribonucleotide nucleotidyltransferase (710 aa).

Residues Asp-501 and Asp-507 each contribute to the Mg(2+) site. Positions 568–628 (PKVQMFQIKP…ETVKQAILFI (61 aa)) constitute a KH domain. Positions 638-710 (NSIYHAHISR…RIDFVLISKK (73 aa)) constitute an S1 motif domain.

The protein belongs to the polyribonucleotide nucleotidyltransferase family. Mg(2+) is required as a cofactor.

The protein resides in the cytoplasm. It catalyses the reaction RNA(n+1) + phosphate = RNA(n) + a ribonucleoside 5'-diphosphate. Involved in mRNA degradation. Catalyzes the phosphorolysis of single-stranded polyribonucleotides processively in the 3'- to 5'-direction. In Phytoplasma australiense, this protein is Polyribonucleotide nucleotidyltransferase.